A 657-amino-acid chain; its full sequence is Probable intron-encoded endonuclease aI2 (657 aa).

Residues 1–245 (MKQMSYVTRW…TYEHLFWFFG (245 aa)) are COX1 exons 1 to 2 encoded. The next 6 membrane-spanning stretches (helical) occupy residues 19–39 (IGMTYLGFGMLSAMMGTGMSV), 69–89 (LLMMFFFIMPVWMGAFGNFFL), 103–123 (LNNISFWCLPPALVCMVCSVL), 152–172 (AMFAMHLTSMSSLLGAMNFMV), 188–208 (PLFAWAMFLTAMLLLLSLPVL), and 269–289 (MYFIMLLITMYMSTNLLANMV). Residues 246–657 (QWWPTNYVNN…KFENKWNKKF (412 aa)) are COX1 intron 2 encoded.

In the C-terminal section; belongs to the LAGLIDADG endonuclease family. It in the N-terminal section; belongs to the heme-copper respiratory oxidase family. Post-translationally, the mature protein may arise from proteolytic cleavage of an in-frame translation of COX1 exons 1 and 2 plus intron 2, containing the aI2 open reading frame.

Its subcellular location is the mitochondrion. It is found in the membrane. In terms of biological role, mitochondrial DNA endonuclease involved in intron homing. In Debaryomyces hansenii (strain ATCC 36239 / CBS 767 / BCRC 21394 / JCM 1990 / NBRC 0083 / IGC 2968) (Yeast), this protein is Probable intron-encoded endonuclease aI2 (aI2).